The following is a 480-amino-acid chain: Vinorine hydroxylase (480 aa).

The chain crosses the membrane as a helical span at residues 3-23; the sequence is LLQILLAIAGLLAILLLQKQW. Residue Cys-418 participates in heme binding.

The protein belongs to the cytochrome P450 family. Heme is required as a cofactor. In terms of tissue distribution, mainly expressed in roots and, to a lesser extent, in leaves.

Its subcellular location is the membrane. It catalyses the reaction vinorine + reduced [NADPH--hemoprotein reductase] + O2 = vomilenine + oxidized [NADPH--hemoprotein reductase] + H2O + H(+). It carries out the reaction vomilenine = perakine. It functions in the pathway alkaloid biosynthesis; ajmaline biosynthesis. Its function is as follows. A cytochrome P450 monooxygenase involved in the biosynthesis of ajmaline-type monoterpenoid indole alkaloids (MIAs) natural products, important plant-derived pharmaceuticals used in the therapy of heart disorders. Catalyzes the hydroxylation of vinorine to vomilenine, an intermediate chemical in the biosynthesis of ajmaline. Supports also vomilenine isomerization to perakine. This is Vinorine hydroxylase from Rauvolfia serpentina (Serpentine wood).